Reading from the N-terminus, the 209-residue chain is Ribosomal RNA large subunit methyltransferase E (209 aa).

S-adenosyl-L-methionine-binding residues include glycine 63, tryptophan 65, aspartate 83, aspartate 99, and aspartate 124. The active-site Proton acceptor is the lysine 164.

This sequence belongs to the class I-like SAM-binding methyltransferase superfamily. RNA methyltransferase RlmE family.

Its subcellular location is the cytoplasm. The catalysed reaction is uridine(2552) in 23S rRNA + S-adenosyl-L-methionine = 2'-O-methyluridine(2552) in 23S rRNA + S-adenosyl-L-homocysteine + H(+). Its function is as follows. Specifically methylates the uridine in position 2552 of 23S rRNA at the 2'-O position of the ribose in the fully assembled 50S ribosomal subunit. This Shigella dysenteriae serotype 1 (strain Sd197) protein is Ribosomal RNA large subunit methyltransferase E.